Reading from the N-terminus, the 529-residue chain is uncharacterized protein (529 aa).

The disordered stretch occupies residues 1 to 20 (MGADLKQPQDADSPPKGVSR). Residues 1–52 (MGADLKQPQDADSPPKGVSRRRFLTTGAAAVVGTGVGAGGTALLSSHPRGPA) constitute a signal peptide (tat-type signal).

In terms of processing, predicted to be exported by the Tat system. The position of the signal peptide cleavage has not been experimentally proven.

This is an uncharacterized protein from Mycobacterium tuberculosis (strain CDC 1551 / Oshkosh).